We begin with the raw amino-acid sequence, 1331 residues long: MASTSSSRASSSSSSSSTPSIPRTITYDVFLSFRGEDTRFNFTDHLYSALGRRGIRTFRDDKLRRGEAIAPELLKAIEESRSSVIVFSENYARSRWCLDELVKIMECHKDKKDPGHAVFPIFYHVDPSHVRKQEGSFGEAFAGYGENLKDKIPRWRTALTEAANLSGWPLQDGYESNQIKEITDSIFRRLKCKRLDAGANLVGIDSHVKEMIWRLHMESSDVRMVGMYGVGGIGKTTIAKVIYNELSREFEYMSFLENIREKFNTQGVSPLQNQLLDDILKGEGSQNINSVAHGASMIKDILSSKIVFIVLDDVDDQSQLEYLLRHREWLGEGSRVIITTRNKHVLDVQKVDDLYEVKGLNFEEACELFSLYAFEQNLPKSDYRNLSHRVVGYCQGLPLALKVLGCLLLKKTIPEWESELRKLDREPEAEILSVLKRSYDGLGRTEKSIFLDVACFFKGEDRDFVSKILDACDFHAEIGIKNLNDKCLITLQYNRIRMHDLIQQMGWEIVREKFPDEPNKWSRLWDTCDFERALTAYKGIKRVETISLDLSKLKRVCSNSNAFAKMTRLRLLKVQSSLDIDFEPEYIDADDKVELYDVVMKNASKMRLGRGFKFPSYELRYLRWDGYPLDFLPSNFDGGKLVELHLKCSNIKQLRLGNKDLEMLKVIDLSYSRKLSQMSEFSSMPNLERLFLRGCVSLIDIHPSVGNMKKLTTLSLKSCKKLKNLPDSIGDLESLEILDLAYCSKFEKFPEKGGNMKSLTELDLQNTAIKDLPDSIGDLESLKYLDLSDCSKFEKFPEKGGNMKSLRELDLRNTAIKDLPDSIRDLESLERLYLSYCSKFEKFPEKGGNMKSLMELDLQNTAIKDLPDSIGDLESLKYLDLSNCSKFEKFPEKGGNMKSLTELFLENTAIKDLPDSIGDLESLVSLNLSDCSKFEKFPEKGGNMKSLNWLYLNNTAIKDLPDSIGDLESLMRLYLSNSSKFEKLPEKVGNMKSLELLDLRNTAIKDLPDSIGDLEPLEKLSLSNCPKFEVLPLSLKAIDAHLCTSKEDLSRLLWLCHRNWLKSTTEEFDRWQLSAFIPESSGIPEWITYQNLGSEVTEKLPINWCEDPDFPGFVLSCLYRPSDYSSAYNFCHDFKCELNLHGNGFTFTDECSHSCWCDCHVNFKDSRDLVCVYWYPKTAIPEEDHHKYTHINASFTHRFEGHPFFCEDIKKIKCGINVIFLGDQRNHMPMLEHPQNSGDNGSALQDANGNVHGANQDDEHYHIPTLGLLGNFHDNGSAVLEDTLGNRKRRRDDSLPDVVEEPHYKKIGSHPTPISCFELHHQYQSEQNHMW.

The tract at residues 1 to 20 is disordered; it reads MASTSSSRASSSSSSSSTPS. One can recognise a TIR domain in the interval 25–190; that stretch reads ITYDVFLSFR…EITDSIFRRL (166 aa). NAD(+)-binding positions include 34-39 and Gly-66; that span reads RGEDTR. Residue Glu-100 is part of the active site. An NB-ARC domain is found at 206–434; the sequence is SHVKEMIWRL…REPEAEILSV (229 aa). LRR repeat units follow at residues 429 to 452, 480 to 509, 540 to 565, 616 to 638, 648 to 673, 684 to 708, 709 to 732, 734 to 756, 757 to 779, 781 to 803, 804 to 826, 828 to 850, 851 to 873, 875 to 897, 898 to 920, 922 to 944, 945 to 967, 969 to 991, 992 to 1014, and 1017 to 1040; these read AEIL…IFLD, IKNL…GWEI, IKRV…AFAK, SYEL…NFDG, CSNI…SYSR, MPNL…VGNM, KKLT…IGDL, SLEI…GGNM, KSLT…IGDL, SLKY…GGNM, KSLR…IRDL, SLER…GGNM, KSLM…IGDL, SLVS…GGNM, KSLN…IGDL, SLMR…VGNM, KSLE…IGDL, and LEKL…AIDA. The short motif at 1287-1291 is the Nuclear localization signal element; the sequence is RKRRR.

This sequence belongs to the disease resistance TIR-NB-LRR family.

It is found in the nucleus. Its subcellular location is the cytoplasm. It carries out the reaction NAD(+) + H2O = ADP-D-ribose + nicotinamide + H(+). The catalysed reaction is NADP(+) + H2O = ADP-D-ribose 2'-phosphate + nicotinamide + H(+). Its function is as follows. Disease resistance (R) protein that confers resistance to multiple powdery and downy mildew by promoting cell death. Acts as a NAD(+) hydrolase (NADase): in response to activation, catalyzes cleavage of NAD(+) into ADP-D-ribose (ADPR) and nicotinamide; NAD(+) cleavage triggering a defense system that promotes cell death. Also able to hydrolyze NADP(+), but not other NAD(+)-related molecules. In Vitis rotundifolia (Muscadine grape), this protein is Disease resistance protein RUN1.